Consider the following 686-residue polypeptide: Alpha-amylase 1 (686 aa).

Catalysis depends on Glu125, which acts as the Nucleophile. Catalysis depends on Asp216, which acts as the Proton donor.

This sequence belongs to the glycosyl hydrolase 57 family.

The protein resides in the cytoplasm. The enzyme catalyses Endohydrolysis of (1-&gt;4)-alpha-D-glucosidic linkages in polysaccharides containing three or more (1-&gt;4)-alpha-linked D-glucose units.. Its function is as follows. This amylase is a highly liquefying-type: oligomers appeared at the beginning of incubation, followed by a graded decrease in the amounts of maltotriose, maltose and glucose in prolonged incubation. This Dictyoglomus thermophilum (strain ATCC 35947 / DSM 3960 / H-6-12) protein is Alpha-amylase 1 (amyA).